Here is a 328-residue protein sequence, read N- to C-terminus: UDP-N-acetylglucosamine transporter YEA4 (328 aa).

10 helical membrane-spanning segments follow: residues 1 to 21, 30 to 50, 66 to 86, 98 to 118, 122 to 142, 166 to 186, 198 to 218, 241 to 261, 274 to 294, and 298 to 318; these read MSFV…VISF, INLG…IQLP, HIPL…SVAN, IHII…WAVC, YSKL…VASL, SMFG…LSLL, WKET…LGYT, LPIA…FICI, LTLS…SVYI, and VLSV…GLYS.

Belongs to the nucleotide-sugar transporter family. SLC35A subfamily.

The protein localises to the golgi apparatus membrane. In terms of biological role, sugar transporter that specifically mediates the transport of UDP-N-acetylglucosamine (UDP-GlcNAc) from the cytosol into Golgi vesicles where glycosyltransferases function. The chain is UDP-N-acetylglucosamine transporter YEA4 (YEA4) from Kluyveromyces lactis (strain ATCC 8585 / CBS 2359 / DSM 70799 / NBRC 1267 / NRRL Y-1140 / WM37) (Yeast).